A 72-amino-acid chain; its full sequence is Large ribosomal subunit protein bL31 (72 aa).

Zn(2+) contacts are provided by cysteine 16, cysteine 18, cysteine 37, and cysteine 40.

This sequence belongs to the bacterial ribosomal protein bL31 family. Type A subfamily. In terms of assembly, part of the 50S ribosomal subunit. Zn(2+) serves as cofactor.

Binds the 23S rRNA. The chain is Large ribosomal subunit protein bL31 from Buchnera aphidicola subsp. Acyrthosiphon pisum (strain APS) (Acyrthosiphon pisum symbiotic bacterium).